Here is a 90-residue protein sequence, read N- to C-terminus: Barstar (90 aa).

Belongs to the barstar family.

It localises to the cytoplasm. In terms of biological role, inhibitor of the ribonuclease barnase. Forms a one-to-one non-covalent complex. This is Barstar from Bacillus amyloliquefaciens (Bacillus velezensis).